The following is a 434-amino-acid chain: MAARRRHVAAGAGAPAPAAGEWPAVTAGGGAAWALSPVEEVGTKQELMRRTGLPPRDLRALDPALSSAASASSCRPSAITGRDRAVVVNLDRARAVITASEVLVPSPRDPAVAPLVRELRARLALAASPTPAPSPSPPQHGMAVGMDGSISPSQASRGGEEAAGNGKDGEALGGGDKALPFEFRALEVCLEFACKSLEHETCTLEKEAYPALDELTSKVSTLNLERVRQIKSRLVAISGKVQKVRDELEHLLDDDMDMAALHLTEKLAYQSSRFDIDKEASELEDHSSRDEEGVEGGGGGDGDDETIAGGGSFSPNTDELEILLESYFVQIDGTLNSLSTLREYVEDTEDYINMMLDEKQNQLLQMGILLSTGTLVSSCAIAVTGVFGINVHISLYDSPASSAAFPCAAAGIVAGSLALYLAALLCYKRAGILQ.

Disordered regions lie at residues 1–21 (MAAR…AAGE), 126–171 (AASP…DGEA), and 279–311 (EASE…AGGG). Low complexity predominate over residues 9–21 (AAGAGAPAPAAGE). A compositionally biased stretch (basic and acidic residues) spans 279-291 (EASELEDHSSRDE). A run of 2 helical transmembrane segments spans residues 367-387 (GILL…TGVF) and 405-425 (FPCA…AALL).

This sequence belongs to the CorA metal ion transporter (MIT) (TC 1.A.35.5) family.

Its subcellular location is the membrane. Putative magnesium transporter. The chain is Putative magnesium transporter MRS2-D (MRS2-D) from Oryza sativa subsp. indica (Rice).